A 360-amino-acid polypeptide reads, in one-letter code: DNA replication and repair protein RecF (360 aa).

Gly-33–Thr-40 provides a ligand contact to ATP.

Belongs to the RecF family.

It is found in the cytoplasm. In terms of biological role, the RecF protein is involved in DNA metabolism; it is required for DNA replication and normal SOS inducibility. RecF binds preferentially to single-stranded, linear DNA. It also seems to bind ATP. The sequence is that of DNA replication and repair protein RecF from Rickettsia bellii (strain OSU 85-389).